The following is a 195-amino-acid chain: 3-isopropylmalate dehydratase small subunit (195 aa).

It belongs to the LeuD family. LeuD type 1 subfamily. Heterodimer of LeuC and LeuD.

It catalyses the reaction (2R,3S)-3-isopropylmalate = (2S)-2-isopropylmalate. It participates in amino-acid biosynthesis; L-leucine biosynthesis; L-leucine from 3-methyl-2-oxobutanoate: step 2/4. Its function is as follows. Catalyzes the isomerization between 2-isopropylmalate and 3-isopropylmalate, via the formation of 2-isopropylmaleate. This Rubrobacter xylanophilus (strain DSM 9941 / JCM 11954 / NBRC 16129 / PRD-1) protein is 3-isopropylmalate dehydratase small subunit.